Reading from the N-terminus, the 1705-residue chain is Rho guanine nucleotide exchange factor 28 (1705 aa).

Disordered regions lie at residues 287–316 and 473–524; these read RPEE…SAAE and KKRS…ETNT. Ser-313 and Ser-478 each carry phosphoserine. Over residues 501–510 the composition is skewed to polar residues; the sequence is PGSQSSSRTG. Ser-624 carries the phosphoserine modification. The interval 630-649 is disordered; the sequence is MTSPRNKSKTKSKDAKDKEK. Basic and acidic residues predominate over residues 640-649; the sequence is KSKDAKDKEK. The Phorbol-ester/DAG-type zinc finger occupies 652–699; it reads RHQFAPGTFSGVLQCLVCDKTLLGKESLQCSNCNANVHKGCKDAAPAC. Composition is skewed to polar residues over residues 710-721 and 759-775; these read NKPQTILGNSSF and VPGT…TSLE. A disordered region spans residues 710–800; sequence NKPQTILGNS…ELLQSMGSSP (91 aa). Positions 777-791 are enriched in basic and acidic residues; the sequence is ESDHNSCRSRSHSDE. The DH domain maps to 849 to 1044; sequence KRQDVIFELM…KDMIATVDLK (196 aa). The region spanning 1086 to 1188 is the PH domain; it reads TLLYDGLVYW…WMRRIQQAVE (103 aa). The segment at 1187–1207 is disordered; sequence VESCPEEKGGRTSESDEDKRK. A compositionally biased stretch (basic and acidic residues) spans 1191 to 1207; sequence PEEKGGRTSESDEDKRK. The segment at 1295–1304 is interaction with PTK2/FAK1; required for regulation of axonal branching and synapse formation; sequence AVSQSCEDSC. Residues 1312–1339 form a disordered region; the sequence is TLSSHDVPGSPTASLVTGGREGRGCSDV. The tract at residues 1372–1383 is mediates cytoplasmic retention and interaction with YWHAH; the sequence is IIQAIQNLTRLL. An interaction with microtubules region spans residues 1425-1705; sequence QKSRDADRQH…DGAKENIVYL (281 aa). The stretch at 1488 to 1525 forms a coiled coil; that stretch reads RSRGELDLQLQEYQHSLERLREGQRLVEREQARMRAQQ. An RNA-binding region spans residues 1496-1527; sequence QLQEYQHSLERLREGQRLVEREQARMRAQQSL. The residue at position 1538 (Ser-1538) is a Phosphoserine. The interval 1566 to 1579 is mediates cytoplasmic retention and interaction with MAPK8IP1; that stretch reads FINEALVQMSFNTF. A disordered region spans residues 1638 to 1705; the sequence is PFHESSKDSC…DGAKENIVYL (68 aa). The segment covering 1641 to 1655 has biased composition (basic and acidic residues); sequence ESSKDSCKNDLDTSH. Polar residues predominate over residues 1656–1669; it reads TESPTPHDSNSHRP. Residues 1688-1699 are compositionally biased toward basic and acidic residues; sequence TRQDGETGDGAK.

Homooligomer; forms cytoplasmic aggregates. Forms a complex with MAPK8 and MAPK8IP1. Interacts with RHOA. Interacts with microtubules. Interacts with YWHAE and YWHAH. Interacts with PTK2/FAK1. Interacts with NEFL. Interacts with CTNND2; prevents interaction with RHOA. In terms of processing, phosphorylated on tyrosine upon stimulation of cells by laminin.

The protein resides in the cytoplasm. It localises to the cell membrane. Its function is as follows. Functions as a RHOA-specific guanine nucleotide exchange factor regulating signaling pathways downstream of integrins and growth factor receptors. Functions in axonal branching, synapse formation and dendritic morphogenesis. Also functions in focal adhesion formation, cell motility and B-lymphocytes activation. May regulate NEFL expression and aggregation and play a role in apoptosis. The sequence is that of Rho guanine nucleotide exchange factor 28 (ARHGEF28) from Homo sapiens (Human).